We begin with the raw amino-acid sequence, 208 residues long: CASP-like protein 2A1 (208 aa).

Over 1 to 36 (MSKMAEQKAAAVDGLGGAGAADAAPAGEAAAARVRP) the chain is Cytoplasmic. A helical transmembrane segment spans residues 37–57 (VETLLRAAPLGLCVAAMTVML). The Extracellular portion of the chain corresponds to 58-78 (RDQQSNEYGTVAYSDLGGFKY). A helical membrane pass occupies residues 79–99 (LVYANGLCAAYSLVSAFYTAV). The Cytoplasmic portion of the chain corresponds to 100 to 108 (PRPATVSRS). Residues 109-129 (WVVFLLDQVFTYLILAAGAAA) traverse the membrane as a helical segment. At 130–161 (AELLYLAYNGDKEVTWSEACGVFGSFCRQART) the chain is on the extracellular side. Residues 162–182 (SVAITFGTVLCFILLSLISSY) form a helical membrane-spanning segment. The Cytoplasmic segment spans residues 183-208 (RLFSAYEAPPSSALGSKGVEIAAYPR).

Belongs to the Casparian strip membrane proteins (CASP) family. Homodimer and heterodimers.

It localises to the cell membrane. The polypeptide is CASP-like protein 2A1 (Sorghum bicolor (Sorghum)).